A 471-amino-acid polypeptide reads, in one-letter code: MIEIQFYNSLSGRKEKFSPSDPNRVTVYSCGPTVYNFAHIGNLRAFLFVDVLRRSLKLLGYGVDMTMNITDIDDKIIRDSIASKKSIIEFTAPWTKAFFEDLKTVSAEILEHYPKATDSIPEMVDIIQKLQKKGLVYEKDESLYFSIQKFQNYGKLSKIDTSGMKTGTRYDTDEYEKEDVRDFVLWKSPKLEGETSWYTLVGTGRPGWHLECSAMIRKVYGSGVDIHTGGVDLLFPHHENEIAQSEGAFPEESFVKTWLHSEHLLVDGQKMSKSKGNFYTLRDLIQQGLDPKAIRFLLISTHYRSKLNFSTDRIAEASANIRKIQNCLDRILELEPDIKADFYFLFSIPFVQTWKKEFEESLADDLNISKALAVVFESVKQINSLLDTNQSDSKQRIEYIQILAYFDRILGVLNFESKKDLLDSEIDSLIEERQIARKNKDFARSDAIRDQLLAQGILIEDTKEGIRWRKK.

Position 30 (C30) interacts with Zn(2+). Residues 32 to 42 (PTVYNFAHIGN) carry the 'HIGH' region motif. Residues C212, H237, and E241 each contribute to the Zn(2+) site. The 'KMSKS' region signature appears at 270–274 (KMSKS). K273 provides a ligand contact to ATP.

Belongs to the class-I aminoacyl-tRNA synthetase family. Monomer. Requires Zn(2+) as cofactor.

Its subcellular location is the cytoplasm. It catalyses the reaction tRNA(Cys) + L-cysteine + ATP = L-cysteinyl-tRNA(Cys) + AMP + diphosphate. The sequence is that of Cysteine--tRNA ligase from Leptospira interrogans serogroup Icterohaemorrhagiae serovar copenhageni (strain Fiocruz L1-130).